A 219-amino-acid chain; its full sequence is Large ribosomal subunit protein uL16 (219 aa).

It belongs to the universal ribosomal protein uL16 family. Component of the large ribosomal subunit. Mature ribosomes consist of a small (40S) and a large (60S) subunit. The 40S subunit contains about 33 different proteins and 1 molecule of RNA (18S). The 60S subunit contains about 49 different proteins and 3 molecules of RNA (28S, 5.8S and 5S).

This chain is Large ribosomal subunit protein uL16 (RpL10), found in Bombyx mandarina (Wild silk moth).